We begin with the raw amino-acid sequence, 212 residues long: 3-isopropylmalate dehydratase small subunit (212 aa).

The protein belongs to the LeuD family. LeuD type 1 subfamily. As to quaternary structure, heterodimer of LeuC and LeuD.

The enzyme catalyses (2R,3S)-3-isopropylmalate = (2S)-2-isopropylmalate. It functions in the pathway amino-acid biosynthesis; L-leucine biosynthesis; L-leucine from 3-methyl-2-oxobutanoate: step 2/4. Its function is as follows. Catalyzes the isomerization between 2-isopropylmalate and 3-isopropylmalate, via the formation of 2-isopropylmaleate. This chain is 3-isopropylmalate dehydratase small subunit, found in Thioalkalivibrio sulfidiphilus (strain HL-EbGR7).